The chain runs to 560 residues: Alpha-farnesene synthase (560 aa).

The Mg(2+) site is built by D308, D312, and E462. The DDXXD motif motif lies at 308–312 (DDIYD).

Belongs to the terpene synthase family. Tpsa subfamily. It depends on Mg(2+) as a cofactor. Expressed in the rind tissues of ripe fruits.

It is found in the cytoplasm. It carries out the reaction (2E,6E)-farnesyl diphosphate = (3E,6E)-alpha-farnesene + diphosphate. The protein operates within secondary metabolite biosynthesis; terpenoid biosynthesis. In terms of biological role, sesquiterpene synthase producing exclusively alpha-farnesene. Associated with the production of sesquiterpenes responsible for the aroma of the fruit. The chain is Alpha-farnesene synthase from Cucumis melo (Muskmelon).